The chain runs to 195 residues: Recombination protein RecR (195 aa).

Residues 54–69 (CTICGSYTEDEICSIC) form a C4-type zinc finger. The Toprim domain maps to 77–172 (ATICVVGFPQ…NITRLASGLP (96 aa)).

Belongs to the RecR family.

Its function is as follows. May play a role in DNA repair. It seems to be involved in an RecBC-independent recombinational process of DNA repair. It may act with RecF and RecO. The protein is Recombination protein RecR of Treponema denticola (strain ATCC 35405 / DSM 14222 / CIP 103919 / JCM 8153 / KCTC 15104).